A 129-amino-acid polypeptide reads, in one-letter code: Small ribosomal subunit protein uS11c (129 aa).

The protein belongs to the universal ribosomal protein uS11 family. Part of the 30S ribosomal subunit.

It localises to the plastid. The protein resides in the chloroplast. In Rhodomonas salina (Cryptomonas salina), this protein is Small ribosomal subunit protein uS11c.